Consider the following 120-residue polypeptide: Putative membrane protein insertion efficiency factor (120 aa).

The interval 93-120 (GRSCQTDVDGANDDWNPASKRGERESFV) is disordered.

The protein belongs to the UPF0161 family.

Its subcellular location is the cell membrane. Functionally, could be involved in insertion of integral membrane proteins into the membrane. The chain is Putative membrane protein insertion efficiency factor from Mycobacterium bovis (strain ATCC BAA-935 / AF2122/97).